The chain runs to 929 residues: Protein translocase subunit SecA (929 aa).

Residues Gln-83, 101-105, and Asp-491 contribute to the ATP site; that span reads GEGKT.

The protein belongs to the SecA family. As to quaternary structure, monomer and homodimer. Part of the essential Sec protein translocation apparatus which comprises SecA, SecYEG and auxiliary proteins SecDF. Other proteins may also be involved.

It localises to the cell inner membrane. The protein localises to the cellular thylakoid membrane. Its subcellular location is the cytoplasm. The enzyme catalyses ATP + H2O + cellular proteinSide 1 = ADP + phosphate + cellular proteinSide 2.. Functionally, part of the Sec protein translocase complex. Interacts with the SecYEG preprotein conducting channel. Has a central role in coupling the hydrolysis of ATP to the transfer of proteins into and across the cell membrane, serving as an ATP-driven molecular motor driving the stepwise translocation of polypeptide chains across the membrane. Its function is as follows. Probably participates in protein translocation into and across both the cytoplasmic and thylakoid membranes in cyanobacterial cells. This is Protein translocase subunit SecA from Thermosynechococcus vestitus (strain NIES-2133 / IAM M-273 / BP-1).